The chain runs to 299 residues: Regucalcin (299 aa).

Position 18 (Glu-18) interacts with a divalent metal cation. 3 residues coordinate substrate: Arg-101, Asn-103, and Glu-121. Positions 154 and 204 each coordinate a divalent metal cation. Asp-204 functions as the Proton donor/acceptor in the catalytic mechanism. N6-succinyllysine occurs at positions 244 and 253.

The protein belongs to the SMP-30/CGR1 family. As to quaternary structure, monomer. Zn(2+) serves as cofactor. The cofactor is Mn(2+). Ca(2+) is required as a cofactor. It depends on Mg(2+) as a cofactor.

It is found in the cytoplasm. The enzyme catalyses D-glucono-1,5-lactone + H2O = D-gluconate + H(+). It participates in cofactor biosynthesis; L-ascorbate biosynthesis via UDP-alpha-D-glucuronate pathway; L-ascorbate from UDP-alpha-D-glucuronate: step 3/4. Gluconolactonase with low activity towards other sugar lactones, including gulonolactone and galactonolactone. Catalyzes a key step in ascorbic acid (vitamin C) biosynthesis. Can also hydrolyze diisopropyl phosphorofluoridate and phenylacetate (in vitro). Calcium-binding protein. Modulates Ca(2+) signaling, and Ca(2+)-dependent cellular processes and enzyme activities. This Sus scrofa (Pig) protein is Regucalcin (RGN).